Here is a 472-residue protein sequence, read N- to C-terminus: Trigger factor (472 aa).

In terms of domain architecture, PPIase FKBP-type spans 172–257 (GDEVRFDFKG…IKEITSVKPQ (86 aa)). 2 stretches are compositionally biased toward polar residues: residues 439 to 449 (NQPKDTASTLS) and 461 to 472 (KTSNTKKVASKK). The interval 439-472 (NQPKDTASTLSKQEDKPKVAKAKTSNTKKVASKK) is disordered.

It belongs to the FKBP-type PPIase family. Tig subfamily.

Its subcellular location is the cytoplasm. It carries out the reaction [protein]-peptidylproline (omega=180) = [protein]-peptidylproline (omega=0). In terms of biological role, involved in protein export. Acts as a chaperone by maintaining the newly synthesized protein in an open conformation. Functions as a peptidyl-prolyl cis-trans isomerase. This chain is Trigger factor, found in Ureaplasma urealyticum serovar 10 (strain ATCC 33699 / Western).